The following is a 290-amino-acid chain: Pyridoxal kinase PdxY (290 aa).

Substrate is bound by residues S12 and 47-48; that span reads TQ. ATP is bound by residues D114, E151, K184, and 211–214; that span reads RPLL. Position 225 (D225) interacts with substrate.

This sequence belongs to the pyridoxine kinase family. PdxY subfamily. In terms of assembly, homodimer. Mg(2+) is required as a cofactor.

The catalysed reaction is pyridoxal + ATP = pyridoxal 5'-phosphate + ADP + H(+). Its pathway is cofactor metabolism; pyridoxal 5'-phosphate salvage; pyridoxal 5'-phosphate from pyridoxal: step 1/1. Pyridoxal kinase involved in the salvage pathway of pyridoxal 5'-phosphate (PLP). Catalyzes the phosphorylation of pyridoxal to PLP. The sequence is that of Pyridoxal kinase PdxY from Pseudomonas putida (strain ATCC 700007 / DSM 6899 / JCM 31910 / BCRC 17059 / LMG 24140 / F1).